The primary structure comprises 459 residues: Protein FAM90A27P (459 aa).

Over residues M1 to A10 the composition is skewed to basic residues. Disordered regions lie at residues M1–V41, S74–P136, H153–P239, and P259–D459. Positions P125–P136 are enriched in basic and acidic residues. The segment covering H184 to G194 has biased composition (polar residues). Residues K341–T353 are compositionally biased toward low complexity. A compositionally biased stretch (polar residues) spans P415–F427.

The protein belongs to the FAM90 family.

The polypeptide is Protein FAM90A27P (FAM90A27P) (Homo sapiens (Human)).